The following is a 187-amino-acid chain: Capsid protein VP10 (187 aa).

C45 and C51 are oxidised to a cystine.

It is found in the virion. VP10 self-assembles, together with capsid protein VP4, to form an icosahedral caspid of 87 nm in diameter, with a T=43 symmetry and composed of 420 hexamers and 12 pentamers. VP4 proteins arrange into hexons, while VP10 proteins form the pentameric densities located at the 5-fold axes in the virion. The stoichiometry of VP4:VP10 is 42:1. The polypeptide is Capsid protein VP10 (Sulfolobus polyhedral virus 1 (SPV1)).